Here is a 351-residue protein sequence, read N- to C-terminus: tRNA-splicing endonuclease (351 aa).

Active-site residues include Y287, H298, and K329.

The protein belongs to the tRNA-intron endonuclease family. Archaeal long subfamily. As to quaternary structure, homodimer.

The catalysed reaction is pretRNA = a 3'-half-tRNA molecule with a 5'-OH end + a 5'-half-tRNA molecule with a 2',3'-cyclic phosphate end + an intron with a 2',3'-cyclic phosphate and a 5'-hydroxyl terminus.. Functionally, endonuclease that removes tRNA introns. Cleaves pre-tRNA at the 5'- and 3'-splice sites to release the intron. The products are an intron and two tRNA half-molecules bearing 2',3' cyclic phosphate and 5'-OH termini. Recognizes a pseudosymmetric substrate in which 2 bulged loops of 3 bases are separated by a stem of 4 bp. This is tRNA-splicing endonuclease from Methanococcoides burtonii (strain DSM 6242 / NBRC 107633 / OCM 468 / ACE-M).